A 214-amino-acid chain; its full sequence is Ornithine decarboxylase antizyme 1 (214 aa).

This sequence belongs to the ODC antizyme family. As to quaternary structure, interacts with ODC1 and thereby sterically blocks ODC homodimerization.

In terms of biological role, ornithine decarboxylase (ODC) antizyme protein that negatively regulates ODC activity and intracellular polyamine biosynthesis and uptake in response to increased intracellular polyamine levels. Binds to ODC monomers, inhibiting the assembly of the functional ODC homodimer, and targets the monomers for ubiquitin-independent proteolytic destruction by the 26S proteasome. The sequence is that of Ornithine decarboxylase antizyme 1 (oaz1a) from Danio rerio (Zebrafish).